The sequence spans 239 residues: 1-(5-phosphoribosyl)-5-[(5-phosphoribosylamino)methylideneamino] imidazole-4-carboxamide isomerase (239 aa).

The active-site Proton acceptor is aspartate 8. Catalysis depends on aspartate 129, which acts as the Proton donor.

This sequence belongs to the HisA/HisF family.

It localises to the cytoplasm. It carries out the reaction 1-(5-phospho-beta-D-ribosyl)-5-[(5-phospho-beta-D-ribosylamino)methylideneamino]imidazole-4-carboxamide = 5-[(5-phospho-1-deoxy-D-ribulos-1-ylimino)methylamino]-1-(5-phospho-beta-D-ribosyl)imidazole-4-carboxamide. The protein operates within amino-acid biosynthesis; L-histidine biosynthesis; L-histidine from 5-phospho-alpha-D-ribose 1-diphosphate: step 4/9. The polypeptide is 1-(5-phosphoribosyl)-5-[(5-phosphoribosylamino)methylideneamino] imidazole-4-carboxamide isomerase (Bacillus thuringiensis (strain Al Hakam)).